A 490-amino-acid polypeptide reads, in one-letter code: Bifunctional protein HldE (490 aa).

Positions 1–328 are ribokinase; that stretch reads MFSFDALLQA…LRRRILPHAS (328 aa). 205-208 contributes to the ATP binding site; that stretch reads NRKE. Residue aspartate 275 is part of the active site. The interval 358-490 is cytidylyltransferase; sequence FTNGCFDILH…LVARAREGQS (133 aa).

It in the N-terminal section; belongs to the carbohydrate kinase PfkB family. This sequence in the C-terminal section; belongs to the cytidylyltransferase family. In terms of assembly, homodimer.

The enzyme catalyses D-glycero-beta-D-manno-heptose 7-phosphate + ATP = D-glycero-beta-D-manno-heptose 1,7-bisphosphate + ADP + H(+). The catalysed reaction is D-glycero-beta-D-manno-heptose 1-phosphate + ATP + H(+) = ADP-D-glycero-beta-D-manno-heptose + diphosphate. Its pathway is nucleotide-sugar biosynthesis; ADP-L-glycero-beta-D-manno-heptose biosynthesis; ADP-L-glycero-beta-D-manno-heptose from D-glycero-beta-D-manno-heptose 7-phosphate: step 1/4. It functions in the pathway nucleotide-sugar biosynthesis; ADP-L-glycero-beta-D-manno-heptose biosynthesis; ADP-L-glycero-beta-D-manno-heptose from D-glycero-beta-D-manno-heptose 7-phosphate: step 3/4. Functionally, catalyzes the phosphorylation of D-glycero-D-manno-heptose 7-phosphate at the C-1 position to selectively form D-glycero-beta-D-manno-heptose-1,7-bisphosphate. In terms of biological role, catalyzes the ADP transfer from ATP to D-glycero-beta-D-manno-heptose 1-phosphate, yielding ADP-D-glycero-beta-D-manno-heptose. The polypeptide is Bifunctional protein HldE (Rhodopseudomonas palustris (strain TIE-1)).